Reading from the N-terminus, the 71-residue chain is Small ribosomal subunit protein bS21 (71 aa).

Positions 48–59 (EKASLAKRHAKR) are enriched in basic residues. The segment at 48 to 71 (EKASLAKRHAKRNFRENARNTRLY) is disordered. Basic and acidic residues predominate over residues 60-71 (NFRENARNTRLY).

The protein belongs to the bacterial ribosomal protein bS21 family.

This Glaesserella parasuis serovar 5 (strain SH0165) (Haemophilus parasuis) protein is Small ribosomal subunit protein bS21.